Consider the following 498-residue polypeptide: ATP synthase subunit beta, chloroplastic (498 aa).

An ATP-binding site is contributed by 172–179; sequence GGAGVGKT.

This sequence belongs to the ATPase alpha/beta chains family. As to quaternary structure, F-type ATPases have 2 components, CF(1) - the catalytic core - and CF(0) - the membrane proton channel. CF(1) has five subunits: alpha(3), beta(3), gamma(1), delta(1), epsilon(1). CF(0) has four main subunits: a(1), b(1), b'(1) and c(9-12).

It is found in the plastid. The protein localises to the chloroplast thylakoid membrane. The enzyme catalyses ATP + H2O + 4 H(+)(in) = ADP + phosphate + 5 H(+)(out). Produces ATP from ADP in the presence of a proton gradient across the membrane. The catalytic sites are hosted primarily by the beta subunits. The sequence is that of ATP synthase subunit beta, chloroplastic from Daucus carota (Wild carrot).